The primary structure comprises 154 residues: Periplasmic nitrate reductase, electron transfer subunit (154 aa).

A signal peptide spans 1–24; it reads MSMHPALRLLATVLVALGAGPAFT. Residues 27–47 form a disordered region; sequence APRLTGADRPMSEVAAPPLPE. The heme c site is built by His-68, Cys-82, Cys-85, His-86, His-103, Cys-122, Cys-125, and His-126.

This sequence belongs to the NapB family. Component of the periplasmic nitrate reductase NapAB complex composed of NapA and NapB. In terms of processing, binds 2 heme C groups per subunit.

The protein resides in the periplasm. Functionally, electron transfer subunit of the periplasmic nitrate reductase complex NapAB. Receives electrons from the membrane-anchored tetraheme c-type NapC protein and transfers these to NapA subunit, thus allowing electron flow between membrane and periplasm. Essential for periplasmic nitrate reduction with nitrate as the terminal electron acceptor. The sequence is that of Periplasmic nitrate reductase, electron transfer subunit from Cereibacter sphaeroides (Rhodobacter sphaeroides).